The sequence spans 265 residues: Neutrophil elastase (265 aa).

Positions 1 to 26 (MALGRLSSRTLAAMLLALFLGGPALA) are cleaved as a signal peptide. Residues 29 to 247 (IVGGRPARPH…FADWINSIIR (219 aa)) enclose the Peptidase S1 domain. C54 and C70 are joined by a disulfide. Active-site charge relay system residues include H69 and D116. N-linked (GlcNAc...) asparagine glycans are attached at residues N123 and N172. Cystine bridges form between C150/C208, C180/C187, and C198/C223. The active-site Charge relay system is the S202.

Belongs to the peptidase S1 family. Elastase subfamily. In terms of assembly, interacts with NOTCH2NL.

The enzyme catalyses Hydrolysis of proteins, including elastin. Preferential cleavage: Val-|-Xaa &gt; Ala-|-Xaa.. In terms of biological role, serine protease that modifies the functions of natural killer cells, monocytes and granulocytes. Inhibits C5a-dependent neutrophil enzyme release and chemotaxis. Promotes blood coagulation. Through the activation of the platelet fibrinogen receptor integrin alpha-IIb/beta-3, potentiates platelet aggregation induced by a threshold concentration of cathepsin G (CTSG). Cleaves and thus inactivates tissue factor pathway inhibitor (TFPI). Capable of killing E.coli; probably digests outer membrane protein A (ompA) in E.coli. This Mus musculus (Mouse) protein is Neutrophil elastase (Elane).